We begin with the raw amino-acid sequence, 330 residues long: Aspartate--ammonia ligase (330 aa).

The protein belongs to the class-II aminoacyl-tRNA synthetase family. AsnA subfamily.

Its subcellular location is the cytoplasm. The catalysed reaction is L-aspartate + NH4(+) + ATP = L-asparagine + AMP + diphosphate + H(+). The protein operates within amino-acid biosynthesis; L-asparagine biosynthesis; L-asparagine from L-aspartate (ammonia route): step 1/1. The sequence is that of Aspartate--ammonia ligase from Edwardsiella ictaluri (strain 93-146).